Here is a 41-residue protein sequence, read N- to C-terminus: Sucrose porin (41 aa).

Positions Met1–Ala22 are cleaved as a signal peptide.

Belongs to the porin LamB (TC 1.B.3) family. In terms of assembly, homotrimer.

The protein localises to the cell outer membrane. In terms of biological role, porin for sucrose uptake. This chain is Sucrose porin (scrY), found in Salmonella thompson.